The primary structure comprises 285 residues: Energy-coupling factor transporter ATP-binding protein EcfA1 (285 aa).

The 238-residue stretch at Val-9–Asp-246 folds into the ABC transporter domain. Gly-43 to Ser-50 is an ATP binding site.

Belongs to the ABC transporter superfamily. Energy-coupling factor EcfA family. As to quaternary structure, forms a stable energy-coupling factor (ECF) transporter complex composed of 2 membrane-embedded substrate-binding proteins (S component), 2 ATP-binding proteins (A component) and 2 transmembrane proteins (T component).

The protein localises to the cell membrane. ATP-binding (A) component of a common energy-coupling factor (ECF) ABC-transporter complex. Unlike classic ABC transporters this ECF transporter provides the energy necessary to transport a number of different substrates. The protein is Energy-coupling factor transporter ATP-binding protein EcfA1 of Lactobacillus gasseri (strain ATCC 33323 / DSM 20243 / BCRC 14619 / CIP 102991 / JCM 1131 / KCTC 3163 / NCIMB 11718 / NCTC 13722 / AM63).